Consider the following 141-residue polypeptide: Ubiquitin-like protein ATG12 (141 aa).

Positions 1–53 are disordered; that stretch reads MSEDSEVVLQLPSAPVGAGGESLPELSPETATPEPPSSAAVSPGTEEPPGDTK. The segment covering 23–40 has biased composition (low complexity); sequence LPELSPETATPEPPSSAA. G141 participates in a covalent cross-link: Glycyl lysine isopeptide (Gly-Lys) (interchain with K-? in acceptor protein).

This sequence belongs to the ATG12 family. In terms of assembly, forms a conjugate with ATG5. Part of the minor complex composed of 4 sets of ATG12-ATG5 and ATG16L1 (400 kDa); this complex interacts with ATG3 leading to disruption of ATG7 interaction and promotion of ATG8-like proteins lipidation. Forms an 800-kDa complex composed of ATG12-ATG5 and ATG16L2. Interacts with DHX58/RIG-1, IFIH1/MDA5 and MAVS/IPS-1 in monomeric form as well as in ATG12-ATG5 conjugate. The interaction with MAVS is further enhanced upon vesicular stomatitis virus (VSV) infection. Interacts with ATG3; this interaction is essential for phosphatidylethanolamine (PE)-conjugated ATG8-like proteins formation. Interacts with ATG7. Interacts with ATG10. The ATG12-ATG5 conjugate interacts with RAB33A; this interaction is bridged by ATG16L1 and promotes ATG12-ATG5-ATG16L1 complex recruitment to phagophores. Interacts with TECPR1. Interacts with SH3BGRL. The ATG12-ATG5 conjugate interacts with PDCD6IP (via the BRO1 domain); this interaction is bridged by ATG12 and promotes multiple PDCD6IP-mediated functions such as endolysosomal trafficking, macroautophagy and exosome biogenesis. Post-translationally, acetylated by EP300. In terms of tissue distribution, ubiquitous.

It localises to the cytoplasm. It is found in the preautophagosomal structure membrane. In terms of biological role, ubiquitin-like protein involved in autophagy vesicles formation. Conjugation with ATG5 through a ubiquitin-like conjugating system involving also ATG7 as an E1-like activating enzyme and ATG10 as an E2-like conjugating enzyme, is essential for its function. The ATG12-ATG5 conjugate acts as an E3-like enzyme which is required for lipidation of ATG8 family proteins and their association to the vesicle membranes. As part of the ATG8 conjugation system with ATG5 and ATG16L1, required for recruitment of LRRK2 to stressed lysosomes and induction of LRRK2 kinase activity in response to lysosomal stress. (Microbial infection) May act as a proviral factor. In association with ATG5, negatively regulates the innate antiviral immune response by impairing the type I IFN production pathway upon vesicular stomatitis virus (VSV) infection. The polypeptide is Ubiquitin-like protein ATG12 (Mus musculus (Mouse)).